We begin with the raw amino-acid sequence, 134 residues long: Endoribonuclease YbeY (134 aa).

Histidine 94, histidine 98, and histidine 104 together coordinate Zn(2+).

Belongs to the endoribonuclease YbeY family. The cofactor is Zn(2+).

It localises to the cytoplasm. In terms of biological role, single strand-specific metallo-endoribonuclease involved in late-stage 70S ribosome quality control and in maturation of the 3' terminus of the 16S rRNA. The protein is Endoribonuclease YbeY of Campylobacter jejuni subsp. jejuni serotype O:23/36 (strain 81-176).